The chain runs to 528 residues: Ecdysteroid UDP-glucosyltransferase (528 aa).

Positions 1–32 (MGHLHIVHWRLTMNGAIAALFLCLVMVHQQHA) are cleaved as a signal peptide.

The protein belongs to the UDP-glycosyltransferase family.

Its function is as follows. Catalyzes the transfer of glucose from UDP-glucose to ecdysteroids which are insect molting hormones. Expression of egt interferes with normal insect development and block molting. In Mamestra brassicae nuclear polyhedrosis virus (MbNPV), this protein is Ecdysteroid UDP-glucosyltransferase (EGT).